The sequence spans 153 residues: ATP synthase subunit b' (153 aa).

The helical transmembrane segment at 23 to 40 (LMAIQVVALTYILNSLFF) threads the bilayer.

It belongs to the ATPase B chain family. As to quaternary structure, F-type ATPases have 2 components, F(1) - the catalytic core - and F(0) - the membrane proton channel. F(1) has five subunits: alpha(3), beta(3), gamma(1), delta(1), epsilon(1). F(0) has four main subunits: a(1), b(1), b'(1) and c(10-14). The alpha and beta chains form an alternating ring which encloses part of the gamma chain. F(1) is attached to F(0) by a central stalk formed by the gamma and epsilon chains, while a peripheral stalk is formed by the delta, b and b' chains.

It is found in the cellular thylakoid membrane. In terms of biological role, f(1)F(0) ATP synthase produces ATP from ADP in the presence of a proton or sodium gradient. F-type ATPases consist of two structural domains, F(1) containing the extramembraneous catalytic core and F(0) containing the membrane proton channel, linked together by a central stalk and a peripheral stalk. During catalysis, ATP synthesis in the catalytic domain of F(1) is coupled via a rotary mechanism of the central stalk subunits to proton translocation. Component of the F(0) channel, it forms part of the peripheral stalk, linking F(1) to F(0). The b'-subunit is a diverged and duplicated form of b found in plants and photosynthetic bacteria. This Prochlorococcus marinus (strain MIT 9301) protein is ATP synthase subunit b'.